The primary structure comprises 388 residues: Chorismate synthase (388 aa).

NADP(+)-binding residues include Arg-39 and Arg-45. FMN-binding positions include 130–132, 251–252, Gly-296, 311–315, and Arg-337; these read RSS, NA, and KPIPT.

The protein belongs to the chorismate synthase family. In terms of assembly, homotetramer. FMNH2 serves as cofactor.

The enzyme catalyses 5-O-(1-carboxyvinyl)-3-phosphoshikimate = chorismate + phosphate. It functions in the pathway metabolic intermediate biosynthesis; chorismate biosynthesis; chorismate from D-erythrose 4-phosphate and phosphoenolpyruvate: step 7/7. Its function is as follows. Catalyzes the anti-1,4-elimination of the C-3 phosphate and the C-6 proR hydrogen from 5-enolpyruvylshikimate-3-phosphate (EPSP) to yield chorismate, which is the branch point compound that serves as the starting substrate for the three terminal pathways of aromatic amino acid biosynthesis. This reaction introduces a second double bond into the aromatic ring system. This chain is Chorismate synthase, found in Streptococcus agalactiae serotype V (strain ATCC BAA-611 / 2603 V/R).